A 3432-amino-acid polypeptide reads, in one-letter code: Genome polyprotein (3432 aa).

Residues 2 to 15 (TKKPGGPGKNRAIN) form an interaction with host EXOC1 region. The Cytoplasmic portion of the chain corresponds to 2–109 (TKKPGGPGKN…RKQNKRGGNE (108 aa)). Positions 37–72 (LLDGRGPVRFVLALITFFKFTALAPTKALLGRWKAV) are hydrophobic; homodimerization of capsid protein C. Positions 106 to 127 (GGNEGSIMWLASLAVVIACAGA) are cleaved as a propeptide — ER anchor for the capsid protein C, removed in mature form by serine protease NS3. The chain crosses the membrane as a helical span at residues 110-130 (GSIMWLASLAVVIACAGAMKL). Over 131 to 253 (SNFQGKLLMT…ATRYLMKTEN (123 aa)) the chain is Extracellular. N142 is a glycosylation site (N-linked (GlcNAc...) asparagine; by host). Residues 254 to 274 (WIIRNPGYAFLAAVLGWMLGS) form a helical membrane-spanning segment. Over 275–279 (NNGQR) the chain is Cytoplasmic. The chain crosses the membrane as a helical span at residues 280-294 (VVFTILLLLVAPAYS). The Extracellular segment spans residues 295 to 746 (FNCLGMGNRD…QVFGGAFRTL (452 aa)). 6 cysteine pairs are disulfide-bonded: C297-C324, C354-C410, C354-C415, C368-C399, C386-C410, and C386-C415. The fusion peptide stretch occupies residues 392–405 (DRGWGNGCGLFGKG). N448 carries an N-linked (GlcNAc...) asparagine; by host glycan. Cystine bridges form between C484–C581 and C598–C629. A helical membrane pass occupies residues 747-767 (FGGMSWITQGLMGALLLWMGV). At 768–773 (NARDRS) the chain is on the cytoplasmic side. Residues 774–794 (IALAFLATGGVLVFLATNVHA) traverse the membrane as a helical segment. Residues 795-1219 (DTGCAIDITR…AFAEANSGGD (425 aa)) lie on the Extracellular side of the membrane. 6 cysteine pairs are disulfide-bonded: C798/C809, C849/C937, C973/C1017, C1074/C1123, C1085/C1106, and C1107/C1110. N924 and N1001 each carry an N-linked (GlcNAc...) asparagine; by host glycan. The chain crosses the membrane as a helical span at residues 1220–1240 (VLHLALIAVFKIQPAFLVMNM). The Cytoplasmic portion of the chain corresponds to 1241–1250 (LSTRWTNQEN). A helical transmembrane segment spans residues 1251 to 1271 (VVLVLGAAFFQLASVDLQIGV). A topological domain (lumenal) is located at residue H1272. Residues 1273–1293 (GILNAAAIAWMIVRAITFPTT) form a helical membrane-spanning segment. The Cytoplasmic portion of the chain corresponds to 1294–1309 (SSVTMPVLALLTPGMR). A helical transmembrane segment spans residues 1310–1330 (ALYLDTYRIILLVIGICSLLH). The Lumenal portion of the chain corresponds to 1331–1341 (ERKKTMAKKKG). A helical membrane pass occupies residues 1342–1362 (AVLLGLALTSTGWFSPTTIAA). Topologically, residues 1363 to 1374 (GLMVCNPNKKRG) are cytoplasmic. The helical transmembrane segment at 1375–1395 (WPATEFLSAVGLMFAIVGGLA) threads the bilayer. Residues 1396 to 1398 (ELD) lie on the Lumenal side of the membrane. A helical transmembrane segment spans residues 1399 to 1419 (IESMSIPFMLAGLMAVSYVVS). The Cytoplasmic portion of the chain corresponds to 1420-1476 (GKATDMWLERAADISWEMDAAITGSSRRLDVKLDDDGDFHLIDDPGVPWKVWVLRMS). Positions 1427-1466 (LERAADISWEMDAAITGSSRRLDVKLDDDGDFHLIDDPGV) are interacts with and activates NS3 protease. The helical intramembrane region spans 1477-1497 (CIGLAALTPWAIVPAAFGYWL). The Cytoplasmic portion of the chain corresponds to 1498–2173 (TLKTTKRGGV…RMALEELPDA (676 aa)). In terms of domain architecture, Peptidase S7 spans 1505–1682 (GGVFWDTPSP…DRQEEPVPEA (178 aa)). Active-site charge relay system; for serine protease NS3 activity residues include H1555, D1579, and S1639. The 157-residue stretch at 1685–1841 (PNMLRKRQMT…DSNAPIHDLQ (157 aa)) folds into the Helicase ATP-binding domain. The segment at 1689–1692 (RKRQ) is important for RNA-binding. Residue 1698 to 1705 (LHPGSGKT) participates in ATP binding. Residues 1789-1792 (DEAH) carry the DEAH box motif. The Helicase C-terminal domain occupies 1852-2017 (GYEWITEYAG…GLVAQLYGPE (166 aa)). Position 1893 is an N6-acetyllysine; by host (K1893). The segment at 1950-1972 (NPSPITSASAAQRRGRVGRNPNQ) is disordered. The tract at residues 2168 to 2172 (EELPD) is regulates the ATPase activity of NS3 helicase. A helical membrane pass occupies residues 2174 to 2194 (LETITLIVAITVMTGGFFLLM). Residues 2195 to 2199 (MQRKG) are Lumenal-facing. The helical intramembrane region spans 2200 to 2220 (IGKMGLGALVLTLATFFLWAA). Position 2221 (E2221) is a topological domain, lumenal. The helical transmembrane segment at 2222 to 2242 (VPGTKIAGTLLIALLLMVVLI) threads the bilayer. At 2243–2257 (PEPEKQRSQTDNQLA) the chain is on the cytoplasmic side. A helical membrane pass occupies residues 2258 to 2278 (VFLICVLTVVGVVAANEYGML). The Lumenal portion of the chain corresponds to 2279–2311 (EKTKADLKSMFGGKTQASGLTGLPSMALDLRPA). An intramembrane region (helical) is located at residues 2312-2332 (TAWALYGGSTVVLTPLLKHLI). Residues 2333–2368 (TSEYVTTSLASINSQAGSLFVLPRGVPFTDLDLTVG) are Lumenal-facing. Residues 2369-2389 (LVFLGCWGQITLTTFLTAMVL) form a helical membrane-spanning segment. The Cytoplasmic segment spans residues 2390 to 2444 (ATLHYGYMLPGWQAEALRAAQRRTAAGIMKNAVVDGMVATDVPELERTTPLMQKK). A helical membrane pass occupies residues 2445-2465 (VGQVLLIGVSVAAFLVNPNVT). The Lumenal segment spans residues 2466 to 2469 (TVRE). The chain crosses the membrane as a helical span at residues 2470–2490 (AGVLVTAATLTLWDNGASAVW). Topologically, residues 2491–3432 (NSTTATGLCH…DVLIQEDRVI (942 aa)) are cytoplasmic. The 266-residue stretch at 2528–2793 (GRPGGRTLGE…DVNLGSGTRA (266 aa)) folds into the mRNA cap 0-1 NS5-type MT domain. S2583 is a binding site for S-adenosyl-L-methionine. S2583 is modified (phosphoserine). The active-site For 2'-O-MTase activity is K2588. Residues G2613, W2614, T2631, K2632, D2658, and V2659 each contribute to the S-adenosyl-L-methionine site. The active-site For 2'-O-MTase activity is D2673. I2674 lines the S-adenosyl-L-methionine pocket. Active-site for 2'-O-MTase activity residues include K2709 and E2745. Y2747 is an S-adenosyl-L-methionine binding site. Zn(2+) is bound by residues E2967, H2971, C2976, and C2979. The RdRp catalytic domain occupies 3057–3209 (GKMYADDTAG…KPLDDRFATA (153 aa)). H3244, C3260, and C3379 together coordinate Zn(2+).

It in the N-terminal section; belongs to the class I-like SAM-binding methyltransferase superfamily. mRNA cap 0-1 NS5-type methyltransferase family. As to quaternary structure, homodimer. Interacts (via N-terminus) with host EXOC1 (via C-terminus); this interaction results in EXOC1 degradation through the proteasome degradation pathway. Forms heterodimers with envelope protein E in the endoplasmic reticulum and Golgi. In terms of assembly, homodimer; in the endoplasmic reticulum and Golgi. Interacts with protein prM. Interacts with non-structural protein 1. Interacts with host HSPA5. As to quaternary structure, homodimer; Homohexamer when secreted. Interacts with envelope protein E. NS1 interacts with NS4B. Interacts with host complement protein CFH; this interaction leads to the degradation of C3. Interacts (via N-terminus) with serine protease NS3. In terms of assembly, forms a heterodimer with serine protease NS3. May form homooligomers. As to quaternary structure, forms a heterodimer with NS2B. Interacts with non-structural protein 2A (via N-terminus). Interacts with NS4B. Interacts with unphosphorylated RNA-directed RNA polymerase NS5; this interaction stimulates RNA-directed RNA polymerase NS5 guanylyltransferase activity. Interacts with host ILF2. Interacts with serine protease NS3. In terms of assembly, homodimer. Interacts with host STAT2; this interaction inhibits the phosphorylation of the latter, and, when all viral proteins are present (polyprotein), targets STAT2 for degradation. Interacts with serine protease NS3. The cofactor is Mn(2+). It depends on Mg(2+) as a cofactor. In terms of processing, specific enzymatic cleavages in vivo yield mature proteins. Cleavages in the lumen of endoplasmic reticulum are performed by host signal peptidase, whereas cleavages in the cytoplasmic side are performed by serine protease NS3. Signal cleavage at the 2K-4B site requires a prior NS3 protease-mediated cleavage at the 4A-2K site. Cleaved in post-Golgi vesicles by a host furin, releasing the mature small envelope protein M, and peptide pr. This cleavage is incomplete as up to 30% of viral particles still carry uncleaved prM. Post-translationally, N-glycosylated. In terms of processing, N-glycosylated. The excreted form is glycosylated and this is required for efficient secretion of the protein from infected cells. Acetylated by host KAT5. Acetylation modulates NS3 RNA-binding and unwinding activities and plays an important positive role for viral replication. Post-translationally, phosphorylated on serines residues. This phosphorylation may trigger NS5 nuclear localization.

It localises to the virion. The protein localises to the host nucleus. Its subcellular location is the host cytoplasm. It is found in the host perinuclear region. The protein resides in the secreted. It localises to the virion membrane. The protein localises to the host endoplasmic reticulum membrane. Its subcellular location is the host cell surface. The catalysed reaction is Selective hydrolysis of -Xaa-Xaa-|-Yaa- bonds in which each of the Xaa can be either Arg or Lys and Yaa can be either Ser or Ala.. The enzyme catalyses RNA(n) + a ribonucleoside 5'-triphosphate = RNA(n+1) + diphosphate. It carries out the reaction a ribonucleoside 5'-triphosphate + H2O = a ribonucleoside 5'-diphosphate + phosphate + H(+). It catalyses the reaction ATP + H2O = ADP + phosphate + H(+). The catalysed reaction is a 5'-end (5'-triphosphoguanosine)-ribonucleoside in mRNA + S-adenosyl-L-methionine = a 5'-end (N(7)-methyl 5'-triphosphoguanosine)-ribonucleoside in mRNA + S-adenosyl-L-homocysteine. The enzyme catalyses a 5'-end (N(7)-methyl 5'-triphosphoguanosine)-ribonucleoside in mRNA + S-adenosyl-L-methionine = a 5'-end (N(7)-methyl 5'-triphosphoguanosine)-(2'-O-methyl-ribonucleoside) in mRNA + S-adenosyl-L-homocysteine + H(+). In terms of biological role, plays a role in virus budding by binding to the cell membrane and gathering the viral RNA into a nucleocapsid that forms the core of a mature virus particle. During virus entry, may induce genome penetration into the host cytoplasm after hemifusion induced by the surface proteins. Can migrate to the cell nucleus where it modulates host functions. Overcomes the anti-viral effects of host EXOC1 by sequestering and degrading the latter through the proteasome degradation pathway. Inhibits RNA silencing by interfering with host Dicer. Its function is as follows. Prevents premature fusion activity of envelope proteins in trans-Golgi by binding to envelope protein E at pH6.0. After virion release in extracellular space, gets dissociated from E dimers. Functionally, acts as a chaperone for envelope protein E during intracellular virion assembly by masking and inactivating envelope protein E fusion peptide. prM is the only viral peptide matured by host furin in the trans-Golgi network probably to avoid catastrophic activation of the viral fusion activity in acidic Golgi compartment prior to virion release. prM-E cleavage is inefficient, and many virions are only partially matured. These uncleaved prM would play a role in immune evasion. In terms of biological role, may play a role in virus budding. Exerts cytotoxic effects by activating a mitochondrial apoptotic pathway through M ectodomain. May display a viroporin activity. Binds to host cell surface receptor and mediates fusion between viral and cellular membranes. Efficient virus attachment to cell is, at least in part, mediated by host HSPA5. Envelope protein is synthesized in the endoplasmic reticulum in the form of heterodimer with protein prM. They play a role in virion budding in the ER, and the newly formed immature particle is covered with 60 spikes composed of heterodimer between precursor prM and envelope protein E. The virion is transported to the Golgi apparatus where the low pH causes dissociation of PrM-E heterodimers and formation of E homodimers. prM-E cleavage is inefficient, and many virions are only partially matured. These uncleaved prM would play a role in immune evasion. Its function is as follows. Involved in immune evasion, pathogenesis and viral replication. Once cleaved off the polyprotein, is targeted to three destinations: the viral replication cycle, the plasma membrane and the extracellular compartment. Essential for viral replication. Required for formation of the replication complex and recruitment of other non-structural proteins to the ER-derived membrane structures. Excreted as a hexameric lipoparticle that plays a role against host immune response. Antagonizing the complement function. Binds to the host macrophages and dendritic cells. Inhibits signal transduction originating from Toll-like receptor 3 (TLR3). Functionally, component of the viral RNA replication complex that functions in virion assembly and antagonizes the host alpha/beta interferon antiviral response. In terms of biological role, required cofactor for the serine protease function of NS3. May have membrane-destabilizing activity and form viroporins. Displays three enzymatic activities: serine protease, NTPase and RNA helicase. NS3 serine protease, in association with NS2B, performs its autocleavage and cleaves the polyprotein at dibasic sites in the cytoplasm: C-prM, NS2A-NS2B, NS2B-NS3, NS3-NS4A, NS4A-2K and NS4B-NS5. NS3 RNA helicase binds RNA and unwinds dsRNA in the 3' to 5' direction. Its function is as follows. Regulates the ATPase activity of the NS3 helicase activity. NS4A allows NS3 helicase to conserve energy during unwinding. Functionally, functions as a signal peptide for NS4B and is required for the interferon antagonism activity of the latter. In terms of biological role, induces the formation of ER-derived membrane vesicles where the viral replication takes place. Inhibits interferon (IFN)-induced host STAT1 phosphorylation and nuclear translocation, thereby preventing the establishment of cellular antiviral state by blocking the IFN-alpha/beta pathway. Inhibits STAT2 translocation in the nucleus after IFN-alpha treatment. Replicates the viral (+) and (-) RNA genome. Performs the capping of genomes in the cytoplasm. NS5 methylates viral RNA cap at guanine N-7 and ribose 2'-O positions. Besides its role in RNA genome replication, also prevents the establishment of cellular antiviral state by blocking the interferon-alpha/beta (IFN-alpha/beta) signaling pathway. Inhibits host TYK2 and STAT2 phosphorylation, thereby preventing activation of JAK-STAT signaling pathway. This is Genome polyprotein from Ardeidae (herons).